The primary structure comprises 360 residues: Phosphoserine aminotransferase (360 aa).

R41 lines the L-glutamate pocket. Pyridoxal 5'-phosphate-binding residues include W101, T152, D172, and Q195. K196 carries the post-translational modification N6-(pyridoxal phosphate)lysine. Position 237–238 (237–238 (NT)) interacts with pyridoxal 5'-phosphate.

Belongs to the class-V pyridoxal-phosphate-dependent aminotransferase family. SerC subfamily. Homodimer. Requires pyridoxal 5'-phosphate as cofactor.

It localises to the cytoplasm. The catalysed reaction is O-phospho-L-serine + 2-oxoglutarate = 3-phosphooxypyruvate + L-glutamate. It carries out the reaction 4-(phosphooxy)-L-threonine + 2-oxoglutarate = (R)-3-hydroxy-2-oxo-4-phosphooxybutanoate + L-glutamate. Its pathway is amino-acid biosynthesis; L-serine biosynthesis; L-serine from 3-phospho-D-glycerate: step 2/3. It participates in cofactor biosynthesis; pyridoxine 5'-phosphate biosynthesis; pyridoxine 5'-phosphate from D-erythrose 4-phosphate: step 3/5. Functionally, catalyzes the reversible conversion of 3-phosphohydroxypyruvate to phosphoserine and of 3-hydroxy-2-oxo-4-phosphonooxybutanoate to phosphohydroxythreonine. The protein is Phosphoserine aminotransferase of Burkholderia cenocepacia (strain ATCC BAA-245 / DSM 16553 / LMG 16656 / NCTC 13227 / J2315 / CF5610) (Burkholderia cepacia (strain J2315)).